Reading from the N-terminus, the 733-residue chain is Methylmalonyl-CoA mutase large subunit (733 aa).

Residues 1-10 (MRIPEFDDIE) show a composition bias toward acidic residues. The tract at residues 1-22 (MRIPEFDDIELGAGGGPSGSAE) is disordered. Positions 78, 81, 88, 90, 92, and 117 each coordinate (R)-methylmalonyl-CoA. Residues phenylalanine 120 and alanine 142 each contribute to the cob(II)alamin site. Threonine 198 and glutamine 200 together coordinate (R)-methylmalonyl-CoA. Cob(II)alamin is bound by residues valine 209 and arginine 210. (R)-methylmalonyl-CoA is bound by residues arginine 210, histidine 247, arginine 286, and serine 288. Positions 336, 373, 376, 612, 613, 614, 615, 658, 660, 689, and 712 each coordinate cob(II)alamin. A B12-binding domain is found at 600-732 (RPRILVAKMG…KRLAADLGHE (133 aa)).

This sequence belongs to the methylmalonyl-CoA mutase family. As to quaternary structure, heterodimer of an alpha and a beta chain. Adenosylcob(III)alamin serves as cofactor.

The catalysed reaction is (R)-methylmalonyl-CoA = succinyl-CoA. Its function is as follows. Catalyzes the isomerization of succinyl-CoA to methylmalonyl-CoA during synthesis of propionate from tricarboxylic acid-cycle intermediates. This conversion most likely represents an important source of building blocks for polyketide antibiotic biosynthesis. It is unable to catalyze the conversion of isobutyryl-CoA into N-butyryl-CoA. The polypeptide is Methylmalonyl-CoA mutase large subunit (mutB) (Streptomyces virginiae (Streptomyces cinnamonensis)).